The chain runs to 209 residues: Uracil phosphoribosyltransferase (209 aa).

Residues Arg-79, Arg-104, and 131–139 (DPMLATGAS) contribute to the 5-phospho-alpha-D-ribose 1-diphosphate site. Uracil contacts are provided by residues Ile-194 and 199-201 (GDA). A 5-phospho-alpha-D-ribose 1-diphosphate-binding site is contributed by Asp-200.

Belongs to the UPRTase family. The cofactor is Mg(2+).

It carries out the reaction UMP + diphosphate = 5-phospho-alpha-D-ribose 1-diphosphate + uracil. The protein operates within pyrimidine metabolism; UMP biosynthesis via salvage pathway; UMP from uracil: step 1/1. Its activity is regulated as follows. Allosterically activated by GTP. Its function is as follows. Catalyzes the conversion of uracil and 5-phospho-alpha-D-ribose 1-diphosphate (PRPP) to UMP and diphosphate. In Staphylococcus epidermidis (strain ATCC 35984 / DSM 28319 / BCRC 17069 / CCUG 31568 / BM 3577 / RP62A), this protein is Uracil phosphoribosyltransferase.